The chain runs to 492 residues: Protein nucleotidyltransferase YdiU (492 aa).

Positions 94, 96, 97, 117, 129, 130, 180, and 187 each coordinate ATP. D257 functions as the Proton acceptor in the catalytic mechanism. Mg(2+)-binding residues include N258 and D267. D267 is a binding site for ATP.

It belongs to the SELO family. Requires Mg(2+) as cofactor. It depends on Mn(2+) as a cofactor.

It catalyses the reaction L-seryl-[protein] + ATP = 3-O-(5'-adenylyl)-L-seryl-[protein] + diphosphate. The enzyme catalyses L-threonyl-[protein] + ATP = 3-O-(5'-adenylyl)-L-threonyl-[protein] + diphosphate. It carries out the reaction L-tyrosyl-[protein] + ATP = O-(5'-adenylyl)-L-tyrosyl-[protein] + diphosphate. The catalysed reaction is L-histidyl-[protein] + UTP = N(tele)-(5'-uridylyl)-L-histidyl-[protein] + diphosphate. It catalyses the reaction L-seryl-[protein] + UTP = O-(5'-uridylyl)-L-seryl-[protein] + diphosphate. The enzyme catalyses L-tyrosyl-[protein] + UTP = O-(5'-uridylyl)-L-tyrosyl-[protein] + diphosphate. Nucleotidyltransferase involved in the post-translational modification of proteins. It can catalyze the addition of adenosine monophosphate (AMP) or uridine monophosphate (UMP) to a protein, resulting in modifications known as AMPylation and UMPylation. In Halalkalibacterium halodurans (strain ATCC BAA-125 / DSM 18197 / FERM 7344 / JCM 9153 / C-125) (Bacillus halodurans), this protein is Protein nucleotidyltransferase YdiU.